A 66-amino-acid chain; its full sequence is Large ribosomal subunit protein bL35 (66 aa).

It belongs to the bacterial ribosomal protein bL35 family.

The protein is Large ribosomal subunit protein bL35 of Acholeplasma laidlawii (strain PG-8A).